The primary structure comprises 431 residues: Glucose-1-phosphate adenylyltransferase (431 aa).

Residue K39 participates in beta-D-fructose 1,6-bisphosphate binding. AMP contacts are provided by R40, H46, and R52. Y114 contacts alpha-D-glucose 1-phosphate. R130 contacts AMP. Residues G179, 194–195 (EK), and S212 contribute to the alpha-D-glucose 1-phosphate site. E370 and R386 together coordinate AMP. Beta-D-fructose 1,6-bisphosphate-binding positions include 419 to 423 (REMLR) and 429 to 431 (QER).

Belongs to the bacterial/plant glucose-1-phosphate adenylyltransferase family. Homotetramer.

It catalyses the reaction alpha-D-glucose 1-phosphate + ATP + H(+) = ADP-alpha-D-glucose + diphosphate. It participates in glycan biosynthesis; glycogen biosynthesis. Allosterically activated by fructose-1,6-bisphosphate (F16BP) and inhibited by AMP. In terms of biological role, involved in the biosynthesis of ADP-glucose, a building block required for the elongation reactions to produce glycogen. Catalyzes the reaction between ATP and alpha-D-glucose 1-phosphate (G1P) to produce pyrophosphate and ADP-Glc. The chain is Glucose-1-phosphate adenylyltransferase from Salmonella paratyphi A (strain ATCC 9150 / SARB42).